We begin with the raw amino-acid sequence, 630 residues long: Probable potassium transport system protein Kup 1 (630 aa).

Transmembrane regions (helical) follow at residues 15–35 (LLAM…TSPL), 58–78 (LISL…VLFL), 104–124 (TAIL…DAMI), 142–162 (PALS…LFAV), 173–193 (FFGP…FMHI), 208–228 (AVAF…AVFL), 252–272 (WFTV…AFVL), 290–310 (ALLP…QAVI), 342–362 (IYLP…VFIF), 368–388 (LATA…VLAF), 399–419 (AWWA…FLGA), and 424–444 (IHDG…IMWT).

Belongs to the HAK/KUP transporter (TC 2.A.72) family.

Its subcellular location is the cell inner membrane. The catalysed reaction is K(+)(in) + H(+)(in) = K(+)(out) + H(+)(out). Functionally, transport of potassium into the cell. Likely operates as a K(+):H(+) symporter. The protein is Probable potassium transport system protein Kup 1 of Sinorhizobium medicae (strain WSM419) (Ensifer medicae).